A 309-amino-acid polypeptide reads, in one-letter code: Protease HtpX homolog (309 aa).

The next 2 membrane-spanning stretches (helical) occupy residues 7 to 27 and 29 to 49; these read TTVLLAAMTALMMIIGQMLGG and QGMMIALIFAGVMNFASYWYS. A Zn(2+)-binding site is contributed by histidine 131. The active site involves glutamate 132. A Zn(2+)-binding site is contributed by histidine 135. 2 consecutive transmembrane segments (helical) span residues 141 to 161 and 182 to 202; these read ILIGTIAATMAGAIMMLASMA and IGLIALSIIAPMAAMVIQMAI. Residue glutamate 207 coordinates Zn(2+). Residues 278 to 309 form a disordered region; it reads RHGSDSGTGNRDSSIRRRNMNTEAKAAWDRLR.

The protein belongs to the peptidase M48B family. Requires Zn(2+) as cofactor.

It is found in the cell inner membrane. The chain is Protease HtpX homolog from Desulforapulum autotrophicum (strain ATCC 43914 / DSM 3382 / VKM B-1955 / HRM2) (Desulfobacterium autotrophicum).